A 336-amino-acid polypeptide reads, in one-letter code: Foldase protein PrsA (336 aa).

Positions 1-22 are cleaved as a signal peptide; that stretch reads MKSAKKLLSVLCLGIFILTFTA. The N-palmitoyl cysteine moiety is linked to residue C23. A lipid anchor (S-diacylglycerol cysteine) is attached at C23. The PpiC domain maps to 194 to 286; the sequence is PNTMNVSHIL…FGYHIIKINS (93 aa).

This sequence belongs to the PrsA family.

It is found in the cell membrane. It carries out the reaction [protein]-peptidylproline (omega=180) = [protein]-peptidylproline (omega=0). Plays a major role in protein secretion by helping the post-translocational extracellular folding of several secreted proteins. This chain is Foldase protein PrsA, found in Clostridium botulinum (strain Okra / Type B1).